A 165-amino-acid polypeptide reads, in one-letter code: Trypsin alpha-3 (165 aa).

One can recognise a Peptidase S1 domain in the interval 1–163; it reads NSGGVLVSVA…LRSWVVSAAN (163 aa). Aspartate 26 (charge relay system) is an active-site residue. 2 disulfide bridges follow: cysteine 89/cysteine 106 and cysteine 115/cysteine 139. Serine 119 functions as the Charge relay system in the catalytic mechanism.

The protein belongs to the peptidase S1 family.

It is found in the secreted. Its subcellular location is the extracellular space. The enzyme catalyses Preferential cleavage: Arg-|-Xaa, Lys-|-Xaa.. This is Trypsin alpha-3 from Lucilia cuprina (Green bottle fly).